The following is a 109-amino-acid chain: Large ribosomal subunit protein uL22 (109 aa).

Belongs to the universal ribosomal protein uL22 family. In terms of assembly, part of the 50S ribosomal subunit.

This protein binds specifically to 23S rRNA; its binding is stimulated by other ribosomal proteins, e.g. L4, L17, and L20. It is important during the early stages of 50S assembly. It makes multiple contacts with different domains of the 23S rRNA in the assembled 50S subunit and ribosome. Functionally, the globular domain of the protein is located near the polypeptide exit tunnel on the outside of the subunit, while an extended beta-hairpin is found that lines the wall of the exit tunnel in the center of the 70S ribosome. In Bordetella avium (strain 197N), this protein is Large ribosomal subunit protein uL22.